The following is a 703-amino-acid chain: Cyclic AMP-dependent transcription factor ATF-6 beta (703 aa).

Ala-2 carries the N-acetylalanine modification. The segment at 2–86 (AELMLLSEIA…ELLPIFPDLQ (85 aa)) is transcription activation. Topologically, residues 2-396 (AELMLLSEIA…ELKLGSGNRK (395 aa)) are cytoplasmic. 3 disordered regions span residues 87–114 (VKSE…PSSE), 229–248 (LDGS…QPKP), and 293–317 (EGPA…GNSC). Positions 89 to 114 (SEPSSPCSSSSLSSESSRLSTEPSSE) are enriched in low complexity. The 64-residue stretch at 325 to 388 (LLKRQQRMIK…EALLAENSEL (64 aa)) folds into the bZIP domain. The basic motif stretch occupies residues 327 to 347 (KRQQRMIKNRESACQSRRKKK). Residues 350–357 (LQGLEARL) form a leucine-zipper region. A helical; Signal-anchor for type II membrane protein transmembrane segment spans residues 397–417 (VVCIMVFLLFIAFNFGPVSIS). The Lumenal portion of the chain corresponds to 418-703 (EPPSAPISPR…SHQPLYLNHP (286 aa)). A disordered region spans residues 447-479 (PVQGVEPLQGSSQGPKEPQPSPTDQPSFSNLTA). 2 N-linked (GlcNAc...) asparagine glycosylation sites follow: Asn-476 and Asn-505. Residues 521–565 (QRHQRGRRKIPQRAQERQKSQPRKKSPPVKAVPIQPPGPPERDSV) form a disordered region. A compositionally biased stretch (basic residues) spans 522–531 (RHQRGRRKIP). Residues Asn-610, Asn-627, and Asn-676 are each glycosylated (N-linked (GlcNAc...) asparagine). Residues 660 to 676 (STVPPSLRKQPSPTPGN) show a composition bias toward polar residues. Residues 660–703 (STVPPSLRKQPSPTPGNATGGPLPVSAASQAHQASHQPLYLNHP) form a disordered region. Residues 685–696 (SAASQAHQASHQ) show a composition bias toward low complexity.

This sequence belongs to the bZIP family. ATF subfamily. In terms of assembly, homodimer and heterodimer with ATF6-alpha. The dimer interacts with the nuclear transcription factor Y (NF-Y) trimer through direct binding to NF-Y subunit C (NF-YC). N-glycosylated. In terms of processing, during unfolded protein response, a fragment of approximately 60 kDa containing the cytoplasmic transcription factor domain is released by proteolysis. The cleavage is probably performed sequentially by site-1 (MBTPS1, S1P) and site-2 (MBTPS2, S2P) proteases. As to expression, ubiquitous.

It localises to the endoplasmic reticulum membrane. The protein resides in the nucleus. Functionally, precursor of the transcription factor form (Processed cyclic AMP-dependent transcription factor ATF-6 beta), which is embedded in the endoplasmic reticulum membrane. Endoplasmic reticulum stress promotes processing of this form, releasing the transcription factor form that translocates into the nucleus, where it activates transcription of genes involved in the unfolded protein response (UPR). In terms of biological role, transcription factor that acts in the unfolded protein response (UPR) pathway by activating UPR target genes induced during ER stress. Binds DNA on the 5'-CCAC[GA]-3' half of the ER stress response element (ERSE) (5'-CCAATN(9)CCAC[GA]-3') when NF-Y is bound to ERSE. The chain is Cyclic AMP-dependent transcription factor ATF-6 beta (ATF6B) from Homo sapiens (Human).